The primary structure comprises 303 residues: N-acetyl-D-glucosamine kinase (303 aa).

ATP-binding positions include 4–11 (GFDIGGTK) and 133–140 (GVGGGLIF). 4 residues coordinate Zn(2+): histidine 157, cysteine 177, cysteine 179, and cysteine 184.

The protein belongs to the ROK (NagC/XylR) family. NagK subfamily.

It carries out the reaction N-acetyl-D-glucosamine + ATP = N-acetyl-D-glucosamine 6-phosphate + ADP + H(+). It functions in the pathway cell wall biogenesis; peptidoglycan recycling. Its function is as follows. Catalyzes the phosphorylation of N-acetyl-D-glucosamine (GlcNAc) derived from cell-wall degradation, yielding GlcNAc-6-P. The polypeptide is N-acetyl-D-glucosamine kinase (Escherichia coli O127:H6 (strain E2348/69 / EPEC)).